Consider the following 542-residue polypeptide: Keratin, type II cytoskeletal 75 (542 aa).

Residues 1 to 26 (MSRQSTVTFHSGSRRGFSTASATTPT) show a composition bias toward polar residues. A disordered region spans residues 1–44 (MSRQSTVTFHSGSRRGFSTASATTPTAGRSRFSSVSVARSSGNS). Positions 1–139 (MSRQSTVTFH…DPTIQRVRKE (139 aa)) are head. Positions 27 to 42 (AGRSRFSSVSVARSSG) are enriched in low complexity. The segment at 140 to 175 (EREQIKTLNNKFASFIDKVRFLEQQNKVLETKWNLL) is coil 1A. Residues 140-453 (EREQIKTLNN…KLLEGEECRL (314 aa)) form the IF rod domain. Residues 176 to 194 (QEQGSRTVRQNLEPFFDAY) are linker 1. The segment at 195-287 (VNDLRRQLDS…VYEAELSQMQ (93 aa)) is coil 1B. Positions 288 to 310 (NQVSDTSVVLSMDNNRSLDLDSI) are linker 12. Residues 311 to 449 (IAEVKAQYED…ATYRKLLEGE (139 aa)) are coil 2. The tail stretch occupies residues 450-542 (ECRLSGEGVS…TSSSRKSYKH (93 aa)). The interval 514 to 542 (TSSSRGPVGSGSSIKFVSSTSSSRKSYKH) is disordered.

Belongs to the intermediate filament family. Heterodimer of a type I and a type II keratin. May associate with KRT17.

Plays a central role in hair and nail formation. Essential component of keratin intermediate filaments in the companion layer of the hair follicle. In Rattus norvegicus (Rat), this protein is Keratin, type II cytoskeletal 75 (Krt75).